We begin with the raw amino-acid sequence, 671 residues long: Phospholipid:diacylglycerol acyltransferase 1 (671 aa).

A disordered region spans residues M1 to G46. Over M1–C54 the chain is Cytoplasmic. Residues E20–K36 show a composition bias toward basic and acidic residues. The helical transmembrane segment at C55–M75 threads the bilayer. Topologically, residues P76–L671 are lumenal. A glycan (N-linked (GlcNAc...) asparagine) is linked at N161. Catalysis depends on S254, which acts as the Acyl-ester intermediate. N-linked (GlcNAc...) asparagine glycans are attached at residues N381 and N434. Active-site charge relay system residues include D573 and H626. N647 carries N-linked (GlcNAc...) asparagine glycosylation.

This sequence belongs to the AB hydrolase superfamily. Lipase family. As to expression, ubiquitous. Highest expression in young developing seeds.

The protein resides in the membrane. It carries out the reaction a glycerophospholipid + a 1,2-diacyl-sn-glycerol = a monoacylglycerophospholipid + a triacyl-sn-glycerol. It functions in the pathway glycerolipid metabolism; triacylglycerol biosynthesis. Its function is as follows. Triacylglycerol formation by an acyl-CoA independent pathway. The enzyme preferentially transfers acyl groups from the sn-2 position of a phospholipid to diacylglycerol, thus forming an sn-1-lysophospholipid. Involved in epoxy and hydroxy fatty acid accumulation in seeds. Has complementary functions with DAG1 that are essential for triacylglycerol synthesis and normal development of both seeds and pollen. This is Phospholipid:diacylglycerol acyltransferase 1 (PDAT1) from Arabidopsis thaliana (Mouse-ear cress).